Here is a 188-residue protein sequence, read N- to C-terminus: Elongation factor P (188 aa).

The protein belongs to the elongation factor P family.

Its subcellular location is the cytoplasm. Its pathway is protein biosynthesis; polypeptide chain elongation. In terms of biological role, involved in peptide bond synthesis. Stimulates efficient translation and peptide-bond synthesis on native or reconstituted 70S ribosomes in vitro. Probably functions indirectly by altering the affinity of the ribosome for aminoacyl-tRNA, thus increasing their reactivity as acceptors for peptidyl transferase. This Ureaplasma parvum serovar 3 (strain ATCC 700970) protein is Elongation factor P (efp).